Reading from the N-terminus, the 376-residue chain is Cysteine synthase 1 (376 aa).

A mitochondrion-targeting transit peptide spans 1–16 (MFRHGVRTFATTSLRR). Position 79 is an N6-(pyridoxal phosphate)lysine (lysine 79). Residues asparagine 109, 215 to 219 (GTGGT), and serine 314 contribute to the pyridoxal 5'-phosphate site.

This sequence belongs to the cysteine synthase/cystathionine beta-synthase family. Pyridoxal 5'-phosphate is required as a cofactor.

Its subcellular location is the mitochondrion. It catalyses the reaction O-succinyl-L-serine + hydrogen sulfide = L-cysteine + succinate. It carries out the reaction O-acetyl-L-serine + hydrogen sulfide = L-cysteine + acetate. It functions in the pathway amino-acid biosynthesis; L-cysteine biosynthesis; L-cysteine from L-serine: step 2/2. Catalyzes the conversion of O-succinyl-L-serine into cysteine, the last step in the cysteine biosynthesis pathway. Can also use O-acetyl-L-serine. The protein is Cysteine synthase 1 (cys-17) of Neurospora crassa (strain ATCC 24698 / 74-OR23-1A / CBS 708.71 / DSM 1257 / FGSC 987).